Reading from the N-terminus, the 1251-residue chain is MAGKLRKSHIPGVSIWQLVEEIPEGCSTPDFEQKPVTSALPEGKNAVFRAVVCGEPRPEVRWQNSKGDLSDSSKYKISSSPGSKEHVLQINKLTGEDTDLYRCTAVNAYGEAACSVRLTVIEVGFRKNRKRHREPQEDLRKELMDFRKLLKKRAPPAPKKKMDLEQIWQLLMTADRKDYEKICLKYGIVDYRGMLRRLQEMKKEQEDKMAQYINTISSLRHIRVTKDGNAKFDLELDLKDSQSKIYLYKDGEMIPYGFNNQTKHCLRRLGKRYEFQIQDLRPEDSGIYQVKVEDAVVFSTELEASAIPPRVVVPLAETHCEEQGDAVFECTLSSPCPSAAWHFRHRLLHPSDKYEVYVSPDGLTHRLVVRGARFSDMGPYSLGTGLYTSSAWLVVEAGKDKDLQSTSADHKLQSRRSGKDGRLDIYGERRDATRSSTSRYKPGTGSFSKDAQGPMGHFSQGLADMEVQPGEAATLSCTLTSDLGPGTWFKDGVKLTTQDGVIFKQDGLVHSLFITHVQGTQAGRYTFVAGDQQSEATLTVQDSPTIAPDVTEKLREPLVVKAGKPVIVKIPFQSHLPIQAAWRKDGAEVVGSSDREAQVDLGDGYTRLCLPSAGRKDCGQYSVTLRSEGGSVQAELTLQVIDKPDPPQGPMEVQDCHRAGVCLRWRPPRDNGGRTVECYVVERRQAGRSTWLKVGEAPADSTTFTDAHVEPGRKYTFRVRAVTSEGAGEALESEEILVAPEALPKAPSAPAILSASSQGITLTWTAPRGPGSAHILGYLIERRKKGSNTWTAVNDQPVPERRWTVADVRQGCQYEFRVTAVAPSGPGEPGPPSDAVFARDPMRPPGLVRNLQVTDRSNTSITLSWAGPDTQEGDEAQGYVVELCSSDSLQWLPCHVGTVPVTTYTAKGLRPGEGYFVRVTAVNEGGQSQPSALDTLVQAMPVTVCPKFLVDSSTKDLLTVKVGDTVRVPVSFEAMPMPEVTWLKDGLPLPKRSVTVTKDGLTQLLIPVAGLSDSGLYTVVLRTLQGKEVAHSFRIRVAACPQAPGPIHLQENVPGTVTAEWEPSPDEAQDVPLHYAVFTRSSAHGPWHEAADRIHTNRFTLLGILPGHEYHFRVVAKNELGASKPSDTSQPWCIPRQRDRFTVKAPCYREPDLSQKPRFLVGLRSHLLPQGCECCMSCAVQGSPRPHVTWFKNDRSLEGNPAVYSTDLLGVCSLTIPSVSPKDSGEYKAVAENTLGQAVSTATLIVIEPST.

Residues 29–119 enclose the Ig-like 1 domain; it reads PDFEQKPVTS…GEAACSVRLT (91 aa). A disordered region spans residues 61-81; the sequence is RWQNSKGDLSDSSKYKISSSP. The stretch at 188–221 forms a coiled coil; the sequence is IVDYRGMLRRLQEMKKEQEDKMAQYINTISSLRH. The 90-residue stretch at 309 to 398 folds into the Ig-like 2 domain; that stretch reads PRVVVPLAET…SSAWLVVEAG (90 aa). Basic and acidic residues predominate over residues 403 to 433; that stretch reads LQSTSADHKLQSRRSGKDGRLDIYGERRDAT. Positions 403-454 are disordered; sequence LQSTSADHKLQSRRSGKDGRLDIYGERRDATRSSTSRYKPGTGSFSKDAQGP. Positions 434–449 are enriched in polar residues; that stretch reads RSSTSRYKPGTGSFSK. Positions 454–539 constitute an Ig-like 3 domain; it reads PMGHFSQGLA…GDQQSEATLT (86 aa). 3 consecutive Fibronectin type-III domains span residues 646-741, 746-845, and 847-942; these read PPQG…VAPE, APSA…MRPP, and LVRN…AMPV. One can recognise an Ig-like 4 domain in the interval 946–1030; sequence PKFLVDSSTK…LRTLQGKEVA (85 aa). The 95-residue stretch at 1043-1137 folds into the Fibronectin type-III 4 domain; sequence APGPIHLQEN…TSQPWCIPRQ (95 aa). The Ig-like 5 domain occupies 1151–1245; that stretch reads PDLSQKPRFL…GQAVSTATLI (95 aa).

As to quaternary structure, interacts with FLNC. Interacts with KY. In terms of tissue distribution, expressed in skeletal muscle.

The protein resides in the nucleus. It is found in the cytoplasm. Its subcellular location is the myofibril. The protein localises to the sarcomere. It localises to the z line. The chain is Immunoglobulin-like and fibronectin type III domain-containing protein 1 (IGFN1) from Homo sapiens (Human).